The sequence spans 84 residues: Exodeoxyribonuclease 7 small subunit (84 aa).

It belongs to the XseB family. In terms of assembly, heterooligomer composed of large and small subunits.

It localises to the cytoplasm. It carries out the reaction Exonucleolytic cleavage in either 5'- to 3'- or 3'- to 5'-direction to yield nucleoside 5'-phosphates.. Its function is as follows. Bidirectionally degrades single-stranded DNA into large acid-insoluble oligonucleotides, which are then degraded further into small acid-soluble oligonucleotides. The protein is Exodeoxyribonuclease 7 small subunit of Caulobacter vibrioides (strain ATCC 19089 / CIP 103742 / CB 15) (Caulobacter crescentus).